Consider the following 282-residue polypeptide: Elongation factor Ts (282 aa).

An involved in Mg(2+) ion dislocation from EF-Tu region spans residues 79–82; sequence TDFV.

This sequence belongs to the EF-Ts family.

Its subcellular location is the cytoplasm. Functionally, associates with the EF-Tu.GDP complex and induces the exchange of GDP to GTP. It remains bound to the aminoacyl-tRNA.EF-Tu.GTP complex up to the GTP hydrolysis stage on the ribosome. This chain is Elongation factor Ts, found in Shewanella loihica (strain ATCC BAA-1088 / PV-4).